The following is a 370-amino-acid chain: Protein SUPPRESSOR OF NIM1 1 (370 aa).

The F-box domain maps to 1 to 43 (MALPWELEEDILSRLPPISLVRFRTVSKHWNSLFNDKTFINNH).

In terms of tissue distribution, ubiquitous, at low levels.

In terms of biological role, negatively regulates a plant defense signaling pathway which is independent of salicylic acid (SA) and systemic acquired resistance (SAR). Confers sensitivity to P.syringae and P.parasitica. The polypeptide is Protein SUPPRESSOR OF NIM1 1 (SON1) (Arabidopsis thaliana (Mouse-ear cress)).